The primary structure comprises 178 residues: ATP synthase subunit delta (178 aa).

Belongs to the ATPase delta chain family. F-type ATPases have 2 components, F(1) - the catalytic core - and F(0) - the membrane proton channel. F(1) has five subunits: alpha(3), beta(3), gamma(1), delta(1), epsilon(1). F(0) has three main subunits: a(1), b(2) and c(10-14). The alpha and beta chains form an alternating ring which encloses part of the gamma chain. F(1) is attached to F(0) by a central stalk formed by the gamma and epsilon chains, while a peripheral stalk is formed by the delta and b chains.

The protein localises to the cell membrane. Functionally, f(1)F(0) ATP synthase produces ATP from ADP in the presence of a proton or sodium gradient. F-type ATPases consist of two structural domains, F(1) containing the extramembraneous catalytic core and F(0) containing the membrane proton channel, linked together by a central stalk and a peripheral stalk. During catalysis, ATP synthesis in the catalytic domain of F(1) is coupled via a rotary mechanism of the central stalk subunits to proton translocation. This protein is part of the stalk that links CF(0) to CF(1). It either transmits conformational changes from CF(0) to CF(1) or is implicated in proton conduction. The polypeptide is ATP synthase subunit delta (Mycoplasma pneumoniae (strain ATCC 29342 / M129 / Subtype 1) (Mycoplasmoides pneumoniae)).